The primary structure comprises 222 residues: Ribulose-phosphate 3-epimerase (222 aa).

Substrate is bound at residue S7. A divalent metal cation is bound by residues H32, D34, and H65. D34 serves as the catalytic Proton acceptor. Substrate is bound by residues H65, 141 to 144 (GFSG), 174 to 176 (DGG), and 196 to 197 (GS). An a divalent metal cation-binding site is contributed by D174. Catalysis depends on D174, which acts as the Proton donor.

It belongs to the ribulose-phosphate 3-epimerase family. A divalent metal cation is required as a cofactor.

It catalyses the reaction D-ribulose 5-phosphate = D-xylulose 5-phosphate. It functions in the pathway carbohydrate degradation. In terms of biological role, catalyzes the reversible epimerization of D-ribulose 5-phosphate to D-xylulose 5-phosphate. This Aquifex aeolicus (strain VF5) protein is Ribulose-phosphate 3-epimerase.